The primary structure comprises 201 residues: Musculin (201 aa).

Disordered regions lie at residues 1–108 (MSTG…NAAN) and 182–201 (RPDSDSKDVSAANRLCGTSA). Positions 46-56 (SAEEEDGEEEP) are enriched in acidic residues. The Nuclear localization signal motif lies at 66–71 (KRKRLR). Residues 74 to 86 (DAGGAGGRAGGAG) show a composition bias toward gly residues. The region spanning 102 to 154 (SQRNAANARERARMRVLSKAFSRLKTSLPWVPPDTKLSKLDTLRLASSYIAHL) is the bHLH domain.

Efficient DNA binding requires dimerization with another bHLH protein. Binds DNA as a homodimer or a heterodimer. Forms a heterodimer with TCF3.

It localises to the nucleus. Transcription repressor that blocks myogenesis and activation of E-box dependent muscle genes. The chain is Musculin (Msc) from Mus musculus (Mouse).